Reading from the N-terminus, the 71-residue chain is Beta-defensin 131A (71 aa).

A signal peptide spans 1–22; the sequence is MRVLFFVFGVLSLMFTVPPARS. 3 disulfides stabilise this stretch: Cys-29-Cys-57, Cys-37-Cys-51, and Cys-41-Cys-58.

The protein belongs to the beta-defensin family.

The protein localises to the secreted. Its function is as follows. Has antibacterial activity. Upon stimulation with lipoteichoic acid, promotes cytokines and chemokines production and secretion. The polypeptide is Beta-defensin 131A (Pan troglodytes (Chimpanzee)).